A 916-amino-acid polypeptide reads, in one-letter code: Chitin synthase B (916 aa).

Disordered stretches follow at residues 1–75 (MAYH…GYSL) and 118–141 (ARSETSSTEAWRQRQAGAAGGGNG). Residues 14–26 (HTYDDGHQLRDLS) show a composition bias toward basic and acidic residues. Residues 59–75 (RGLTASPVQRPTSGYSL) are compositionally biased toward polar residues. The next 7 helical transmembrane spans lie at 544 to 561 (RWLNGSFAAGIYSLMHFG), 588 to 608 (FLTWFSLASYWLTTSVIMDLV), 629 to 649 (IINTLVKYIYLAFLLLQFILA), 664 to 684 (SFVAFGIIQLYVVVDALYLVV), 716 to 736 (IIIIALAATFGLYFVASFMYL), 845 to 865 (LVTLWLFSNGLLAVCITSEGL), and 884 to 904 (ALLWSNAVVALIRFIGATWFL).

It belongs to the chitin synthase family. Class III subfamily. Interacts with kibesin kinA. Activity requires trypsin activation, suggesting a zymogenic nature. In terms of processing, phosphorylated at yet unidentified residues in a N-terminal disordered region-dependent manner.

It is found in the cell membrane. Its subcellular location is the cell tip. The protein resides in the cell septum. The enzyme catalyses [(1-&gt;4)-N-acetyl-beta-D-glucosaminyl](n) + UDP-N-acetyl-alpha-D-glucosamine = [(1-&gt;4)-N-acetyl-beta-D-glucosaminyl](n+1) + UDP + H(+). Activity is stimulated by Mg(2+) and is inhibited by polyoxin D. Polymerizes chitin, a structural polymer of the cell wall and septum, by transferring the sugar moiety of UDP-GlcNAc to the non-reducing end of the growing chitin polymer. Does not substantially contribute to the rigidity of the cell wall but is necessary for normal hyphal growth and organization. In addition to its functions in the formation of normal cell walls of hyphae, is also involved in conidiophore and conidia development. This chain is Chitin synthase B, found in Emericella nidulans (strain FGSC A4 / ATCC 38163 / CBS 112.46 / NRRL 194 / M139) (Aspergillus nidulans).